The chain runs to 327 residues: Aspartate--ammonia ligase (327 aa).

It belongs to the class-II aminoacyl-tRNA synthetase family. AsnA subfamily.

Its subcellular location is the cytoplasm. It carries out the reaction L-aspartate + NH4(+) + ATP = L-asparagine + AMP + diphosphate + H(+). It functions in the pathway amino-acid biosynthesis; L-asparagine biosynthesis; L-asparagine from L-aspartate (ammonia route): step 1/1. This Bacillus mycoides (strain KBAB4) (Bacillus weihenstephanensis) protein is Aspartate--ammonia ligase.